A 365-amino-acid polypeptide reads, in one-letter code: Phospho-N-acetylmuramoyl-pentapeptide-transferase (365 aa).

A run of 10 helical transmembrane segments spans residues 22 to 42 (YISV…LALG), 74 to 94 (TMGG…WGDL), 95 to 115 (TSIY…IGFF), 133 to 153 (YKFA…FYLL), 168 to 188 (SLYI…IING), 201 to 221 (GLAI…AYIE), 240 to 260 (LAEV…FLWF), 267 to 287 (VFMG…IAVM), 292 to 312 (LIFF…MLQV), and 342 to 362 (KVVI…LAAI).

The protein belongs to the glycosyltransferase 4 family. MraY subfamily. Mg(2+) serves as cofactor.

Its subcellular location is the cell inner membrane. The catalysed reaction is UDP-N-acetyl-alpha-D-muramoyl-L-alanyl-gamma-D-glutamyl-meso-2,6-diaminopimeloyl-D-alanyl-D-alanine + di-trans,octa-cis-undecaprenyl phosphate = di-trans,octa-cis-undecaprenyl diphospho-N-acetyl-alpha-D-muramoyl-L-alanyl-D-glutamyl-meso-2,6-diaminopimeloyl-D-alanyl-D-alanine + UMP. The protein operates within cell wall biogenesis; peptidoglycan biosynthesis. Catalyzes the initial step of the lipid cycle reactions in the biosynthesis of the cell wall peptidoglycan: transfers peptidoglycan precursor phospho-MurNAc-pentapeptide from UDP-MurNAc-pentapeptide onto the lipid carrier undecaprenyl phosphate, yielding undecaprenyl-pyrophosphoryl-MurNAc-pentapeptide, known as lipid I. In Francisella tularensis subsp. tularensis (strain WY96-3418), this protein is Phospho-N-acetylmuramoyl-pentapeptide-transferase.